The primary structure comprises 289 residues: 4-hydroxy-tetrahydrodipicolinate synthase (289 aa).

Residue Thr-43 coordinates pyruvate. Tyr-131 serves as the catalytic Proton donor/acceptor. Lys-160 functions as the Schiff-base intermediate with substrate in the catalytic mechanism. Position 200 (Val-200) interacts with pyruvate.

The protein belongs to the DapA family. As to quaternary structure, homotetramer; dimer of dimers.

Its subcellular location is the cytoplasm. It carries out the reaction L-aspartate 4-semialdehyde + pyruvate = (2S,4S)-4-hydroxy-2,3,4,5-tetrahydrodipicolinate + H2O + H(+). It participates in amino-acid biosynthesis; L-lysine biosynthesis via DAP pathway; (S)-tetrahydrodipicolinate from L-aspartate: step 3/4. In terms of biological role, catalyzes the condensation of (S)-aspartate-beta-semialdehyde [(S)-ASA] and pyruvate to 4-hydroxy-tetrahydrodipicolinate (HTPA). In Methanococcus maripaludis (strain C5 / ATCC BAA-1333), this protein is 4-hydroxy-tetrahydrodipicolinate synthase.